The chain runs to 195 residues: Thymidine kinase (195 aa).

ATP-binding positions include 9–16 (STMNAGKS) and 87–90 (DEAQ). E88 (proton acceptor) is an active-site residue. The Zn(2+) site is built by C145, C147, C182, and H185.

Belongs to the thymidine kinase family. In terms of assembly, homotetramer.

Its subcellular location is the cytoplasm. It carries out the reaction thymidine + ATP = dTMP + ADP + H(+). This Mannheimia succiniciproducens (strain KCTC 0769BP / MBEL55E) protein is Thymidine kinase.